Consider the following 280-residue polypeptide: Late embryogenesis abundant protein M17 (280 aa).

The N-terminal stretch at 1–22 (MGNLKSLVLLALLFSFSVAVFA) is a signal peptide. Residue Asn-23 is glycosylated (N-linked (GlcNAc...) asparagine). 2 consecutive repeat copies span residues 76 to 97 (GGCR…CCRS) and 131 to 152 (GGCR…CCRS). Positions 76 to 262 (GGCRWGCCGG…RGRCRYCCRS (187 aa)) are 4 X 22 AA repeats, Cys-rich. The segment at 163–184 (VEPNDVEPQQGGRGGGGGGGGG) is disordered. Positions 173–184 (GGRGGGGGGGGG) are enriched in gly residues. Repeat 3 spans residues 186–207 (GGCRWGCCGGWWRGRCRYCCRS). A disordered region spans residues 218–239 (VEPNDVEPQQGGRGGGGGGGGG). A compositionally biased stretch (gly residues) spans 228 to 239 (GGRGGGGGGGGG). Copy 4 of the repeat occupies 241–262 (GGCRWGCCGGWWRGRCRYCCRS).

Functionally, may be involved in the acquisition of desiccation tolerance during late phase of embryogenesis. The chain is Late embryogenesis abundant protein M17 from Arabidopsis thaliana (Mouse-ear cress).